A 366-amino-acid polypeptide reads, in one-letter code: DNA primase large subunit PriL (366 aa).

The [4Fe-4S] cluster site is built by cysteine 227, cysteine 298, cysteine 307, and cysteine 314.

The protein belongs to the eukaryotic-type primase large subunit family. Heterodimer of a small subunit (PriS) and a large subunit (PriL). The cofactor is [4Fe-4S] cluster.

Functionally, regulatory subunit of DNA primase, an RNA polymerase that catalyzes the synthesis of short RNA molecules used as primers for DNA polymerase during DNA replication. Stabilizes and modulates the activity of the small subunit, increasing the rate of DNA synthesis, and conferring RNA synthesis capability. The DNA polymerase activity may enable DNA primase to also catalyze primer extension after primer synthesis. May also play a role in DNA repair. The protein is DNA primase large subunit PriL of Methanocella arvoryzae (strain DSM 22066 / NBRC 105507 / MRE50).